The chain runs to 185 residues: Alcohol dehydrogenase 1 (185 aa).

Residues 10-15, Asp-34, Lys-39, 103-105, and Arg-180 contribute to the NAD(+) site; these read GLGGVG and VGV.

The protein belongs to the zinc-containing alcohol dehydrogenase family. Class-I subfamily. In terms of assembly, homodimer. Zn(2+) is required as a cofactor.

The protein resides in the cytoplasm. The catalysed reaction is a primary alcohol + NAD(+) = an aldehyde + NADH + H(+). It carries out the reaction a secondary alcohol + NAD(+) = a ketone + NADH + H(+). In Anas platyrhynchos (Mallard), this protein is Alcohol dehydrogenase 1 (ADH1).